Consider the following 431-residue polypeptide: Chaperone SurA (431 aa).

The first 22 residues, 1 to 22, serve as a signal peptide directing secretion; that stretch reads MKLWKPTLISVLSALTLFNAHA. 2 consecutive PpiC domains span residues 173–271 and 280–380; these read TVQY…KIDD and VTEV…EVLD.

The protein resides in the periplasm. It catalyses the reaction [protein]-peptidylproline (omega=180) = [protein]-peptidylproline (omega=0). Chaperone involved in the correct folding and assembly of outer membrane proteins. Recognizes specific patterns of aromatic residues and the orientation of their side chains, which are found more frequently in integral outer membrane proteins. May act in both early periplasmic and late outer membrane-associated steps of protein maturation. In Vibrio cholerae serotype O1 (strain ATCC 39315 / El Tor Inaba N16961), this protein is Chaperone SurA.